The following is a 432-amino-acid chain: Adenylosuccinate synthetase (432 aa).

Residues 13-19 and 41-43 contribute to the GTP site; these read GDEGKGK and GHT. Asp14 functions as the Proton acceptor in the catalytic mechanism. 2 residues coordinate Mg(2+): Asp14 and Gly41. IMP-binding positions include 14–17, 39–42, Thr130, Arg144, Gln225, Thr240, and Arg304; these read DEGK and NAGH. His42 serves as the catalytic Proton donor. 300-306 contributes to the substrate binding site; that stretch reads ATTGRKR. Residues Arg306, 332-334, and 415-417 contribute to the GTP site; these read KLD and STG.

The protein belongs to the adenylosuccinate synthetase family. Homodimer. Mg(2+) is required as a cofactor.

It localises to the cytoplasm. It carries out the reaction IMP + L-aspartate + GTP = N(6)-(1,2-dicarboxyethyl)-AMP + GDP + phosphate + 2 H(+). It participates in purine metabolism; AMP biosynthesis via de novo pathway; AMP from IMP: step 1/2. Functionally, plays an important role in the de novo pathway of purine nucleotide biosynthesis. Catalyzes the first committed step in the biosynthesis of AMP from IMP. This chain is Adenylosuccinate synthetase, found in Alteromonas mediterranea (strain DSM 17117 / CIP 110805 / LMG 28347 / Deep ecotype).